A 304-amino-acid chain; its full sequence is Homoserine kinase (304 aa).

91–101 (PLGKGMGSSAA) contributes to the ATP binding site.

It belongs to the GHMP kinase family. Homoserine kinase subfamily.

The protein localises to the cytoplasm. The catalysed reaction is L-homoserine + ATP = O-phospho-L-homoserine + ADP + H(+). Its pathway is amino-acid biosynthesis; L-threonine biosynthesis; L-threonine from L-aspartate: step 4/5. Its function is as follows. Catalyzes the ATP-dependent phosphorylation of L-homoserine to L-homoserine phosphate. The chain is Homoserine kinase from Solibacter usitatus (strain Ellin6076).